Reading from the N-terminus, the 550-residue chain is Chaperonin GroEL (550 aa).

ATP-binding positions include 30-33 (TLGP), K51, 87-91 (DGTTT), G415, 479-481 (NAA), and D495.

It belongs to the chaperonin (HSP60) family. Forms a cylinder of 14 subunits composed of two heptameric rings stacked back-to-back. Interacts with the co-chaperonin GroES.

The protein localises to the cytoplasm. It catalyses the reaction ATP + H2O + a folded polypeptide = ADP + phosphate + an unfolded polypeptide.. Functionally, together with its co-chaperonin GroES, plays an essential role in assisting protein folding. The GroEL-GroES system forms a nano-cage that allows encapsulation of the non-native substrate proteins and provides a physical environment optimized to promote and accelerate protein folding. The chain is Chaperonin GroEL from Polaromonas sp. (strain JS666 / ATCC BAA-500).